Reading from the N-terminus, the 852-residue chain is DNA mismatch repair protein MutS (852 aa).

ATP is bound at residue 615 to 622; sequence GPNMAGKS.

This sequence belongs to the DNA mismatch repair MutS family.

In terms of biological role, this protein is involved in the repair of mismatches in DNA. It is possible that it carries out the mismatch recognition step. This protein has a weak ATPase activity. The protein is DNA mismatch repair protein MutS of Thermodesulfovibrio yellowstonii (strain ATCC 51303 / DSM 11347 / YP87).